We begin with the raw amino-acid sequence, 557 residues long: Dihydroxy-acid dehydratase 1 (557 aa).

[2Fe-2S] cluster is bound at residue Cys-50. Asp-82 lines the Mg(2+) pocket. Cys-123 is a binding site for [2Fe-2S] cluster. Positions 124 and 125 each coordinate Mg(2+). The residue at position 125 (Lys-125) is an N6-carboxylysine. Cys-195 provides a ligand contact to [2Fe-2S] cluster. Position 447 (Glu-447) interacts with Mg(2+). The Proton acceptor role is filled by Ser-473.

This sequence belongs to the IlvD/Edd family. In terms of assembly, homodimer. [2Fe-2S] cluster is required as a cofactor. Mg(2+) serves as cofactor.

The catalysed reaction is (2R)-2,3-dihydroxy-3-methylbutanoate = 3-methyl-2-oxobutanoate + H2O. The enzyme catalyses (2R,3R)-2,3-dihydroxy-3-methylpentanoate = (S)-3-methyl-2-oxopentanoate + H2O. Its pathway is amino-acid biosynthesis; L-isoleucine biosynthesis; L-isoleucine from 2-oxobutanoate: step 3/4. It functions in the pathway amino-acid biosynthesis; L-valine biosynthesis; L-valine from pyruvate: step 3/4. Its function is as follows. Functions in the biosynthesis of branched-chain amino acids. Catalyzes the dehydration of (2R,3R)-2,3-dihydroxy-3-methylpentanoate (2,3-dihydroxy-3-methylvalerate) into 2-oxo-3-methylpentanoate (2-oxo-3-methylvalerate) and of (2R)-2,3-dihydroxy-3-methylbutanoate (2,3-dihydroxyisovalerate) into 2-oxo-3-methylbutanoate (2-oxoisovalerate), the penultimate precursor to L-isoleucine and L-valine, respectively. In Cupriavidus pinatubonensis (strain JMP 134 / LMG 1197) (Cupriavidus necator (strain JMP 134)), this protein is Dihydroxy-acid dehydratase 1.